The following is a 230-amino-acid chain: Cytidylate kinase (230 aa).

12–20 lines the ATP pocket; that stretch reads GPSGAGKGT.

It belongs to the cytidylate kinase family. Type 1 subfamily.

The protein localises to the cytoplasm. It carries out the reaction CMP + ATP = CDP + ADP. The catalysed reaction is dCMP + ATP = dCDP + ADP. The protein is Cytidylate kinase of Shewanella loihica (strain ATCC BAA-1088 / PV-4).